Consider the following 436-residue polypeptide: UPF0229 protein mll9637 (436 aa).

A disordered region spans residues 54–103 (IPRKGTGEPTFGDDKESGRRQHILPGNRTFSSGDLIPKPGGGGGYGSAAG).

The protein belongs to the UPF0229 family.

In Mesorhizobium japonicum (strain LMG 29417 / CECT 9101 / MAFF 303099) (Mesorhizobium loti (strain MAFF 303099)), this protein is UPF0229 protein mll9637.